A 11197-amino-acid polypeptide reads, in one-letter code: Nonribosomal peptide synthetase 5 (11197 aa).

Residues 19–413 (AQRARKQPDA…DGTLQVVGHK (395 aa)) are adenylation (A) domain 1. Residues 426–452 (HASSSASSVGETPGVTGPISTPMGDSV) form a disordered region. The segment at 690 to 897 (KQLRQFCQEQ…LMDESMKQQI (208 aa)) is condensation (C) domain 1. An adenylation (A) domain 2 region spans residues 918–1310 (DAAQDYPDAP…GRHDGQLKVR (393 aa)). Residues 1446–1522 (ADRSPVHMML…DMANNIAISE (77 aa)) form the Carrier 1 domain. O-(pantetheine 4'-phosphoryl)serine is present on S1483. Positions 1952 to 2380 (VEDVYPCSPV…SDISLMDPLS (429 aa)) are condensation (C) domain 2. The interval 2406–2805 (VARIEPDKMA…QRKDTQIKIR (400 aa)) is adenylation (A) domain 3. The region spanning 2945–3021 (DSLTSTEVTI…SLAAFVDYDS (77 aa)) is the Carrier 2 domain. S2982 carries the O-(pantetheine 4'-phosphoryl)serine modification. The interval 3041–3481 (EESFALSPIQ…TSTMKSEFTL (441 aa)) is epimerase (E) domain 1. Residues 3515-3957 (EEIFPCSPMQ…VSPETRCELD (443 aa)) form a condensation (C) domain 3 region. Positions 3976 to 4371 (FEQQVEKIPD…RRRDNQVKVR (396 aa)) are adenylation (A) domain 4. In terms of domain architecture, Carrier 3 spans 4508 to 4584 (RKLTPMEQQL…ELANHARFKA (77 aa)). S4545 is modified (O-(pantetheine 4'-phosphoryl)serine). Positions 4603 to 5022 (FPLLPIQRMF…LNEYTAALRS (420 aa)) are epimerase (E) domain 2. The tract at residues 5069-5501 (ESIYPCSPLQ…LVGDSERQGL (433 aa)) is condensation (C) domain 4. The interval 5521 to 5918 (EAQVKAIPDN…RRKDTQVKVR (398 aa)) is adenylation (A) domain 5. In terms of domain architecture, Carrier 4 spans 6068-6141 (SEAEDIIRAV…ALAQFVSQST (74 aa)). An O-(pantetheine 4'-phosphoryl)serine modification is found at S6102. The tract at residues 6162-6512 (FSLSPIQQMF…MEILFNYFGQ (351 aa)) is epimerase (E) domain 3. The segment at 6636 to 7076 (EEIFPCSPIQ…LVGAETRREM (441 aa)) is condensation (C) domain 5. The tract at residues 7097 to 7491 (ERNSQAMPDR…RRRDNQVKVR (395 aa)) is adenylation (A) domain 6. A Carrier 5 domain is found at 7636 to 7712 (KPKTKMEEHF…DLAGRSRFKN (77 aa)). Position 7673 is an O-(pantetheine 4'-phosphoryl)serine (S7673). The segment at 7733–8162 (ALLPIQRLFF…KYMLETLASQ (430 aa)) is epimerase (E) domain 4. A condensation (C) domain 6 region spans residues 8205–8638 (EASYPCSPLQ…MLGDSGRKRI (434 aa)). Residues 8660 to 8832 (EAHVKESPNR…DHRATATEIV (173 aa)) are adenylation (A) domain 7. The Carrier 6 domain occupies 9173-9248 (SAQTAVVQII…AMAAKAQQIG (76 aa)). An O-(pantetheine 4'-phosphoryl)serine modification is found at S9209. The tract at residues 9565–9683 (RVKDMRRAIP…LHEVVSALQK (119 aa)) is epimerase (E) domain 5. The interval 9721 to 10116 (VEDVYPTSPM…LVPAKHMEQL (396 aa)) is condensation (C) domain 7. The adenylation (A) domain 8 stretch occupies residues 10136 to 10529 (DDMVRSTPTA…VGRKDTQIKI (394 aa)). A Carrier 7 domain is found at 10663-10749 (LDSSDYVAMQ…TLAVTIKADM (87 aa)). O-(pantetheine 4'-phosphoryl)serine is present on S10708. The thioesterase (TE) domain stretch occupies residues 10806–11104 (NFLVTGSTGF…SLRPMSGPEW (299 aa)).

The protein belongs to the NRP synthetase family.

Its pathway is secondary metabolite biosynthesis. In terms of biological role, nonribosomal peptide synthetase; part of the Fg3_54/C64 gene cluster that mediates the biosynthesis of the octapeptide fusaoctaxin A, a virulence factor that is required for cell-to-cell invasiveness of plant host. The 2 nonribosomal peptide synthetases NRPS9 and NRPS5 form an assembly line which likely utilizes GABA as a starter unit (loaded on the unique module M1 of NRPS9) and sequentially incorporates seven extender units composed of the residues L-Ala, L-allo-Ile, L-Ser, L-Val, L-Ser, L-Leu and L-Leu, respectively. During the process, each of the residues that are tethered on modules M3-M7 of NRPS5 containing an E domain can undergo an epimerization reaction to produce a D-configuration before the transpeptidation reaction occurs. The elongation of the peptidyl chain might be terminated by module M8-mediated L-Leu incorporation, followed by R domain-catalyzed 4 electron reduction to release the resulting octapeptide from the assembly line as an alcohol. Fusaoctaxin A is cleaved by the cluster specific ABC transporter FGM5 to the pentapeptide fusapentaxin A and the tripeptide fusatrixin A. The other enzymes from the cluster, FGM1, FGM2, FGM3 and FGM9 seem not to be involved in the biosynthesis of fusaoctaxin A and their functions have still to be determined. This Gibberella zeae (strain ATCC MYA-4620 / CBS 123657 / FGSC 9075 / NRRL 31084 / PH-1) (Wheat head blight fungus) protein is Nonribosomal peptide synthetase 5.